Consider the following 429-residue polypeptide: Serine--tRNA ligase (429 aa).

229–231 is a binding site for L-serine; that stretch reads TAE. Residue 260–262 coordinates ATP; that stretch reads RSE. Residue glutamate 283 participates in L-serine binding. 347 to 350 serves as a coordination point for ATP; that stretch reads EISS. Serine 383 contributes to the L-serine binding site.

This sequence belongs to the class-II aminoacyl-tRNA synthetase family. Type-1 seryl-tRNA synthetase subfamily. Homodimer. The tRNA molecule binds across the dimer.

It is found in the cytoplasm. It carries out the reaction tRNA(Ser) + L-serine + ATP = L-seryl-tRNA(Ser) + AMP + diphosphate + H(+). The enzyme catalyses tRNA(Sec) + L-serine + ATP = L-seryl-tRNA(Sec) + AMP + diphosphate + H(+). It functions in the pathway aminoacyl-tRNA biosynthesis; selenocysteinyl-tRNA(Sec) biosynthesis; L-seryl-tRNA(Sec) from L-serine and tRNA(Sec): step 1/1. Functionally, catalyzes the attachment of serine to tRNA(Ser). Is also able to aminoacylate tRNA(Sec) with serine, to form the misacylated tRNA L-seryl-tRNA(Sec), which will be further converted into selenocysteinyl-tRNA(Sec). This chain is Serine--tRNA ligase, found in Orientia tsutsugamushi (strain Ikeda) (Rickettsia tsutsugamushi).